The sequence spans 453 residues: tRNA modification GTPase MnmE (453 aa).

3 residues coordinate (6S)-5-formyl-5,6,7,8-tetrahydrofolate: R22, E79, and K119. In terms of domain architecture, TrmE-type G spans 215-376 (GMKVVIAGRP…LRNHLKECMG (162 aa)). Position 225 (N225) interacts with K(+). GTP contacts are provided by residues 225–230 (NAGKSS), 244–250 (TDIAGTT), 269–272 (DTAG), and 334–337 (NKAD). S229 contributes to the Mg(2+) binding site. K(+) is bound by residues T244, I246, and T249. T250 contributes to the Mg(2+) binding site. A (6S)-5-formyl-5,6,7,8-tetrahydrofolate-binding site is contributed by K453.

Belongs to the TRAFAC class TrmE-Era-EngA-EngB-Septin-like GTPase superfamily. TrmE GTPase family. Homodimer. Heterotetramer of two MnmE and two MnmG subunits. K(+) is required as a cofactor.

The protein localises to the cytoplasm. Functionally, exhibits a very high intrinsic GTPase hydrolysis rate. Involved in the addition of a carboxymethylaminomethyl (cmnm) group at the wobble position (U34) of certain tRNAs, forming tRNA-cmnm(5)s(2)U34. The sequence is that of tRNA modification GTPase MnmE from Vibrio parahaemolyticus serotype O3:K6 (strain RIMD 2210633).